Consider the following 189-residue polypeptide: GTP cyclohydrolase 1 (189 aa).

Cys-78, His-81, and Cys-150 together coordinate Zn(2+).

The protein belongs to the GTP cyclohydrolase I family. As to quaternary structure, homomer.

The enzyme catalyses GTP + H2O = 7,8-dihydroneopterin 3'-triphosphate + formate + H(+). The protein operates within cofactor biosynthesis; 7,8-dihydroneopterin triphosphate biosynthesis; 7,8-dihydroneopterin triphosphate from GTP: step 1/1. The chain is GTP cyclohydrolase 1 from Listeria monocytogenes serotype 4a (strain HCC23).